A 443-amino-acid chain; its full sequence is UDP-N-acetylmuramate--L-alanine ligase (443 aa).

ATP is bound at residue 110–116; that stretch reads GAHGKTS.

The protein belongs to the MurCDEF family.

It is found in the cytoplasm. It carries out the reaction UDP-N-acetyl-alpha-D-muramate + L-alanine + ATP = UDP-N-acetyl-alpha-D-muramoyl-L-alanine + ADP + phosphate + H(+). The protein operates within cell wall biogenesis; peptidoglycan biosynthesis. Cell wall formation. In Streptococcus suis (strain 98HAH33), this protein is UDP-N-acetylmuramate--L-alanine ligase.